The primary structure comprises 803 residues: MALASQLSVTDDSAYGFITTNAEIVSKKRKLAQNDDRFEVVMSVYSPKADSMDVGVSVLKLKTLELTLMSFCDSSTFVRTVNQIQVYEPTSIILPEAQSHSQIEKLKYIIHSNISDKVRERFMKAKVFNAFDGMNSLKLYTDINESTLGQVISNRKLSLAAANACIDYCVSTKMFRVTNKIRLKYCMCENTMLIDTCTVRDLELVDSLSETGTTLYSFLNCCLTKMGMRILRTSILQPSTHENSIILRSESLQELINDEDALISIRSSLKHTCDLEKVFSTFLEPRGLLSQEQEINNIILLKTVLQNTFVIRKSIQNVSSHLLVQVKQILEHENVQHLLAIINEYIRNDCQWANNSTELANQRANAVKSGVNGLLDVSRRIRETLLEEVSELVAKLSEELEIFMEYRFEISRGFFIKIKGNNTDINSLPEVLINRVKKRKTIECTTIELMKQSSRYNDIVSEITTLNSTIIHDMYTSINSYTPILLMVSEAIGTLDLLCSFAYFTSLQKDSYTCPEFAKEVTIMRSLHPILGGNNSNFVANNYSCNHELSRIHVITGANMSGKSVYLRQIAYLVIMAQMGCFVPAEYARMRIFNSLYSRISSDNVDINASSFSKEMSETAVILNDSDGDSLILIDELGRGSSLTDGFSICLAILEDLICKEATVITTTHFRDIAQVLANKSCVVTAHMQTVETNGQLEMKYNLVLGRNDIVGYGIRFAEVSNLLPQELIEDSKVVANILRSRKPVHGDKELKLLSRRRKLVLELYFALNYISKLNCDMNYKMQLLQTLQSKFVEEINITPNTE.

Position 557–564 (Gly-557–Ser-564) interacts with ATP.

Belongs to the DNA mismatch repair MutS family. As to quaternary structure, heterooligomer of MSH4 and MSH5.

Functionally, involved in meiotic recombination. Facilitate crossovers between homologs during meiosis. This Candida albicans (Yeast) protein is MutS protein homolog 4 (MSH4).